The following is a 172-amino-acid chain: Diphosphoinositol polyphosphate phosphohydrolase 1 (172 aa).

Methionine 1 bears the N-acetylmethionine mark. Substrate contacts are provided by residues arginine 10, 18–20 (KKR), and 39–41 (SSR). One can recognise a Nudix hydrolase domain in the interval 17–142 (YKKRAACLCF…KPVQASYFET (126 aa)). Positions 50 and 66 each coordinate Mg(2+). A Nudix box motif is present at residues 51–72 (GGMEPEEEPSVAAVREVCEEAG). Glutamate 69 functions as the Proton acceptor in the catalytic mechanism. A Mg(2+)-binding site is contributed by glutamate 70. Residues 89 to 91 (RKH), arginine 115, and lysine 133 contribute to the substrate site.

This sequence belongs to the Nudix hydrolase family. DIPP subfamily. As to quaternary structure, monomer. Requires Mg(2+) as cofactor. Mn(2+) serves as cofactor. The cofactor is Zn(2+). Widely expressed. Expressed at higher level in brain, heart, pancreas and liver. Also expressed in placenta, lung and kidney.

It is found in the cytoplasm. The protein resides in the nucleus. It carries out the reaction diphospho-myo-inositol polyphosphate + H2O = myo-inositol polyphosphate + phosphate.. The enzyme catalyses 5-diphospho-1D-myo-inositol 1,2,3,4,6-pentakisphosphate + H2O = 1D-myo-inositol hexakisphosphate + phosphate + H(+). It catalyses the reaction 3,5-bis(diphospho)-1D-myo-inositol 1,2,4,6-tetrakisphosphate + H2O = 3-diphospho-1D-myo-inositol 1,2,4,5,6-pentakisphosphate + phosphate + 2 H(+). The catalysed reaction is [phosphate](n+1) + n H2O = (n+1) phosphate + n H(+). It carries out the reaction P(1),P(5)-bis(5'-adenosyl) pentaphosphate + H2O = ADP + ATP + 2 H(+). The enzyme catalyses P(1),P(6)-bis(5'-adenosyl) hexaphosphate + H2O = 2 ATP + 2 H(+). It catalyses the reaction P(1),P(4)-bis(5'-adenosyl) tetraphosphate + H2O = AMP + ATP + 2 H(+). The catalysed reaction is a 5'-end (N(7)-methyl 5'-triphosphoguanosine)-ribonucleoside in mRNA + H2O = N(7)-methyl-GMP + a 5'-end diphospho-ribonucleoside in mRNA + 2 H(+). It carries out the reaction a 5'-end (N(7)-methyl 5'-triphosphoguanosine)-ribonucleoside in mRNA + H2O = N(7)-methyl-GDP + a 5'-end phospho-ribonucleoside in mRNA + 2 H(+). Its activity is regulated as follows. Endopolyphospahatase activity is inhibited by NaF, NaPPi, beta-glycerol phosphate and heparin. 5-diphosphoinositol pentakisphosphate (5-InsP7) inhibits its mRNA decapping activity. Its function is as follows. Cleaves a beta-phosphate from the diphosphate groups in PP-InsP5 (diphosphoinositol pentakisphosphate) and [PP]2-InsP4 (bisdiphosphoinositol tetrakisphosphate), suggesting that it may play a role in signal transduction. InsP6 (inositol hexakisphosphate) is not a substrate. Acts as a negative regulator of the ERK1/2 pathway. Also able to catalyze the hydrolysis of dinucleoside oligophosphates, with diadenosine 5',5'''-P1,P6-hexaphosphate (Ap6A) and diadenosine 5',5'''- P1,P5-pentaphosphate (Ap5A) being the preferred substrates. The major reaction products are ADP and p4a from Ap6A and ADP and ATP from Ap5A. Also able to hydrolyze 5-phosphoribose 1-diphosphate. Acts as a decapping enzyme that modulates the stability of a subset of mRNAs implicated in cell motility. Hydrolyzes monomethylated capped RNA after both the alpha- and beta-phosphates generating m7GMP + ppRNA and m7GDP + pRNA. Can hydrolyze unmethylated capped RNAs. Divalent cations zinc, magnesium and manganese determine its substrate specificity. Exhibits diphosphoinositol polyphosphate phosphohydrolase in the presence of magnesium ions, diadenosine hexaphosphate hydrolase activity in the presence of manganese ions and endopolyphosphatase activity in the presence of zinc ions. Plays an important role in limiting DNA damage and maintaining cell survival upon oxidative stress via its endopolyphosphatase activity. The protein is Diphosphoinositol polyphosphate phosphohydrolase 1 of Homo sapiens (Human).